The sequence spans 908 residues: Magnesium-transporting ATPase, P-type 1 (908 aa).

The span at 1–20 shows a compositional bias: basic and acidic residues; that stretch reads MTDMNIENRKLNRPASENDK. The segment at 1-21 is disordered; sequence MTDMNIENRKLNRPASENDKQ. The Cytoplasmic segment spans residues 1-80; it reads MTDMNIENRK…QVPPALIQLL (80 aa). A helical transmembrane segment spans residues 81–101; sequence QAFNNPFIYVLMALAGVSFIT. Residues 102–113 are Extracellular-facing; the sequence is DYWLPLRRGEET. The helical transmembrane segment at 114 to 134 threads the bilayer; sequence DLTGVLIILTMVSLSGLLRFW. The Cytoplasmic portion of the chain corresponds to 135–293; the sequence is QEFRTNRAAQ…QTAFDRGVNS (159 aa). Residues 294–314 form a helical membrane-spanning segment; the sequence is VSWLLIRFMLIMVPVVLLING. The Extracellular segment spans residues 315–323; it reads FSKGDWVEA. Residues 324 to 341 form a helical membrane-spanning segment; it reads SLFALAVAVGLTPEMLPM. Glu337 contacts Mg(2+). Topologically, residues 342–704 are cytoplasmic; it reads IVSSNLAKGA…IKGRETFGNI (363 aa). The active-site 4-aspartylphosphate intermediate is the Asp379. Mg(2+) contacts are provided by Asp650, Asp654, and Asn718. The chain crosses the membrane as a helical span at residues 705-724; that stretch reads IKYLNMTASSNFGNVFSVLV. The Extracellular segment spans residues 725–733; it reads ASAFIPFLP. Residues 734–753 form a helical membrane-spanning segment; it reads MLAIHLLIQNLMYDISQLSL. Residues Asn743 and Asp747 each contribute to the Mg(2+) site. Topologically, residues 754–775 are cytoplasmic; the sequence is PWDKMDKEFLRKPRKWDAKNIG. A helical transmembrane segment spans residues 776 to 799; that stretch reads RFMLWIGPTSSIFDITTFALMWYV. Over 800-808 the chain is Extracellular; the sequence is FAANNVEAQ. The helical transmembrane segment at 809-827 threads the bilayer; that stretch reads ALFQSGWFIEGLLSQTLVV. Residues 828-840 lie on the Cytoplasmic side of the membrane; the sequence is HMLRTQKIPFIQS. The helical transmembrane segment at 841–860 threads the bilayer; it reads RATLPVLLTTGLIMAIGIYI. At 861–875 the chain is on the extracellular side; the sequence is PFSPLGAMVGLEPLP. The chain crosses the membrane as a helical span at residues 876–895; that stretch reads LSYFPWLVATLLSYCLVAQG. Residues 896–908 are Cytoplasmic-facing; the sequence is MKRFYIKRFGQWF.

This sequence belongs to the cation transport ATPase (P-type) (TC 3.A.3) family. Type IIIB subfamily.

The protein localises to the cell inner membrane. It carries out the reaction Mg(2+)(out) + ATP + H2O = Mg(2+)(in) + ADP + phosphate + H(+). In terms of biological role, mediates magnesium influx to the cytosol. This is Magnesium-transporting ATPase, P-type 1 (mgtB) from Salmonella typhimurium (strain LT2 / SGSC1412 / ATCC 700720).